We begin with the raw amino-acid sequence, 444 residues long: Adenylyltransferase and sulfurtransferase UBA4 (444 aa).

ATP is bound by residues Gly-81, Asp-102, Ser-109–Arg-113, Lys-126, and Asp-170–Thr-171. Positions 212 and 215 each coordinate Zn(2+). Residue Cys-229 is the Glycyl thioester intermediate; for adenylyltransferase activity of the active site. Zn(2+)-binding residues include Cys-290 and Cys-293. A Rhodanese domain is found at Lys-343–Pro-442. Catalysis depends on Cys-401, which acts as the Cysteine persulfide intermediate; for sulfurtransferase activity.

The protein in the N-terminal section; belongs to the HesA/MoeB/ThiF family. UBA4 subfamily. The cofactor is Zn(2+).

The protein resides in the cytoplasm. Its subcellular location is the cytosol. It functions in the pathway tRNA modification; 5-methoxycarbonylmethyl-2-thiouridine-tRNA biosynthesis. Plays a central role in 2-thiolation of mcm(5)S(2)U at tRNA wobble positions of cytosolic tRNA(Lys), tRNA(Glu) and tRNA(Gln). Acts by mediating the C-terminal thiocarboxylation of sulfur carrier URM1. Its N-terminus first activates URM1 as acyl-adenylate (-COAMP), then the persulfide sulfur on the catalytic cysteine is transferred to URM1 to form thiocarboxylation (-COSH) of its C-terminus. The reaction probably involves hydrogen sulfide that is generated from the persulfide intermediate and that acts as a nucleophile towards URM1. Subsequently, a transient disulfide bond is formed. Does not use thiosulfate as sulfur donor; NFS1 probably acting as a sulfur donor for thiocarboxylation reactions. Prior mcm(5) tRNA modification by the elongator complex is required for 2-thiolation. May also be involved in protein urmylation. This chain is Adenylyltransferase and sulfurtransferase UBA4, found in Kluyveromyces lactis (strain ATCC 8585 / CBS 2359 / DSM 70799 / NBRC 1267 / NRRL Y-1140 / WM37) (Yeast).